Reading from the N-terminus, the 511-residue chain is Colicin-B (511 aa).

A TonB box motif is present at residues 17–24 (DTMVVWPS). 2 helical membrane passes run 455-475 (MASA…LIAF) and 477-497 (LSAT…GAFI).

Belongs to the channel forming colicin family.

It is found in the cell membrane. Functionally, this colicin is a channel-forming colicin. This class of transmembrane toxins depolarize the cytoplasmic membrane, leading to dissipation of cellular energy. Colicins are polypeptide toxins produced by and active against E.coli and closely related bacteria. This is Colicin-B (cba) from Escherichia coli.